The primary structure comprises 149 residues: Ribosome-binding factor A (149 aa).

The disordered stretch occupies residues 125-149 (FGSADEVLNEDEGATDDTDDTKGKD). Residues 131–143 (VLNEDEGATDDTD) are compositionally biased toward acidic residues.

This sequence belongs to the RbfA family. In terms of assembly, monomer. Binds 30S ribosomal subunits, but not 50S ribosomal subunits or 70S ribosomes.

It is found in the cytoplasm. Its function is as follows. One of several proteins that assist in the late maturation steps of the functional core of the 30S ribosomal subunit. Associates with free 30S ribosomal subunits (but not with 30S subunits that are part of 70S ribosomes or polysomes). Required for efficient processing of 16S rRNA. May interact with the 5'-terminal helix region of 16S rRNA. In Shewanella sp. (strain W3-18-1), this protein is Ribosome-binding factor A.